The following is a 506-amino-acid chain: MSIRPEEISSILKQEIERFSTEIETSNVGRVIQVGDGIARVYGLQSCMASELLEFPNGIMGMAFNLEEDNIGVVILGPDEDIKEGMEVRRTGRVVEVPVGPALIGRVVNALGEPLDGKGPIETDMYLPVERKAPGVITRKSVHEPLQTGLKAIDSMTPIGRGQRELIIGDRGTGKTAIAVDTIINQKGQNCICIYVGIGQKASTIAGVVKKLQETGAMEYTIVVSATASDPAPLQFLAPYAGCAMGEYFRDNGMHALIVYDDLSKHAVAYREMSLLMRRPPGREAYPGDVFYLHSRLLERAAKMSDEYGAGSLTALPIIETQAGDVSAYIPTNVISITDGQIFLETDLFNAGVRPAINVGISVSRVGGAAQIDSMKRVSGTLKLDLAQYRELAAFAQFGSDLDKATQARIIRGQRTTEILKQPQYHPLPVELQVLSIFAATNGYLDDLELEEVAAFEQELHTYFKANHPELLARIPKEKWKDIEPEVRAAVDAFKKGYGQRAAANQ.

An ATP-binding site is contributed by 169 to 176 (GDRGTGKT).

This sequence belongs to the ATPase alpha/beta chains family. F-type ATPases have 2 components, CF(1) - the catalytic core - and CF(0) - the membrane proton channel. CF(1) has five subunits: alpha(3), beta(3), gamma(1), delta(1), epsilon(1). CF(0) has three main subunits: a(1), b(2) and c(9-12). The alpha and beta chains form an alternating ring which encloses part of the gamma chain. CF(1) is attached to CF(0) by a central stalk formed by the gamma and epsilon chains, while a peripheral stalk is formed by the delta and b chains.

It is found in the cell membrane. The enzyme catalyses ATP + H2O + 4 H(+)(in) = ADP + phosphate + 5 H(+)(out). Produces ATP from ADP in the presence of a proton gradient across the membrane. The alpha chain is a regulatory subunit. This chain is ATP synthase subunit alpha, found in Symbiobacterium thermophilum (strain DSM 24528 / JCM 14929 / IAM 14863 / T).